The sequence spans 381 residues: Alkanesulfonate monooxygenase (381 aa).

This sequence belongs to the SsuD family. As to quaternary structure, homotetramer.

The catalysed reaction is an alkanesulfonate + FMNH2 + O2 = an aldehyde + FMN + sulfite + H2O + 2 H(+). Catalyzes the desulfonation of aliphatic sulfonates. This chain is Alkanesulfonate monooxygenase, found in Cronobacter sakazakii (strain ATCC BAA-894) (Enterobacter sakazakii).